The primary structure comprises 948 residues: UvrABC system protein A (948 aa).

33 to 40 (GLSGSGKS) is an ATP binding site. The segment at 252-279 (CPICGFSIGELEPRMFSFNSPFGACPTC) adopts a C4-type zinc-finger fold. 2 consecutive ABC transporter domains span residues 309-587 (WIPT…KKSL) and 607-935 (ASDR…KYLK). Residue 639–646 (GVSGSGKS) participates in ATP binding. The segment at 738-764 (CEACKGDGIIKIEMHFLPDVYVPCEVC) adopts a C4-type zinc-finger fold.

It belongs to the ABC transporter superfamily. UvrA family. In terms of assembly, forms a heterotetramer with UvrB during the search for lesions.

The protein localises to the cytoplasm. In terms of biological role, the UvrABC repair system catalyzes the recognition and processing of DNA lesions. UvrA is an ATPase and a DNA-binding protein. A damage recognition complex composed of 2 UvrA and 2 UvrB subunits scans DNA for abnormalities. When the presence of a lesion has been verified by UvrB, the UvrA molecules dissociate. The chain is UvrABC system protein A from Staphylococcus aureus (strain MRSA252).